A 252-amino-acid chain; its full sequence is Chitooligosaccharide deacetylase (252 aa).

Mg(2+) is bound by residues histidine 61 and histidine 125.

It belongs to the YdjC deacetylase family. ChbG subfamily. In terms of assembly, homodimer. Mg(2+) is required as a cofactor.

Its subcellular location is the cytoplasm. The enzyme catalyses N,N'-diacetylchitobiose + H2O = N-acetyl-beta-D-glucosaminyl-(1-&gt;4)-D-glucosamine + acetate. The catalysed reaction is diacetylchitobiose-6'-phosphate + H2O = N'-monoacetylchitobiose-6'-phosphate + acetate. It participates in glycan degradation; chitin degradation. Functionally, involved in the degradation of chitin. ChbG is essential for growth on the acetylated chitooligosaccharides chitobiose and chitotriose but is dispensable for growth on cellobiose and chitosan dimer, the deacetylated form of chitobiose. Deacetylation of chitobiose-6-P and chitotriose-6-P is necessary for both the activation of the chb promoter by the regulatory protein ChbR and the hydrolysis of phosphorylated beta-glucosides by the phospho-beta-glucosidase ChbF. Catalyzes the removal of only one acetyl group from chitobiose-6-P to yield monoacetylchitobiose-6-P, the inducer of ChbR and the substrate of ChbF. The sequence is that of Chitooligosaccharide deacetylase from Citrobacter koseri (strain ATCC BAA-895 / CDC 4225-83 / SGSC4696).